Consider the following 1006-residue polypeptide: uncharacterized protein (1006 aa).

The interval 326-371 (EMEKKRPRSPELVPKKIVMEKERPSSPDSEAEEREHNLRIEKERHQ) is disordered. 2 stretches are compositionally biased toward basic and acidic residues: residues 338–350 (VPKK…ERPS) and 358–371 (EREH…ERHQ). Coiled-coil stretches lie at residues 358 to 473 (EREH…ARLA) and 756 to 782 (EVQK…AFGR).

This is an uncharacterized protein from Caenorhabditis elegans.